The chain runs to 201 residues: Small ribosomal subunit protein uS4c (201 aa).

The tract at residues 15–44 (LGALPGLTSKRPKTGNDLKNQSRSGKKSQY) is disordered. The region spanning 89–150 (MRLDNILFRL…EKKSRTLIQN (62 aa)) is the S4 RNA-binding domain.

Belongs to the universal ribosomal protein uS4 family. As to quaternary structure, part of the 30S ribosomal subunit. Contacts protein S5. The interaction surface between S4 and S5 is involved in control of translational fidelity.

It localises to the plastid. The protein resides in the chloroplast. In terms of biological role, one of the primary rRNA binding proteins, it binds directly to 16S rRNA where it nucleates assembly of the body of the 30S subunit. Functionally, with S5 and S12 plays an important role in translational accuracy. The protein is Small ribosomal subunit protein uS4c (rps4) of Cucumis sativus (Cucumber).